The sequence spans 522 residues: L-tyrosine/L-DOPA decarboxylase 2 (522 aa).

2 tandem repeats follow at residues 75–132 and 135–186. Positions 75–186 are 2 X approximate tandem repeats; that stretch reads KDVHDDIVPG…RILDRIGREH (112 aa). The pyridoxal 5'-phosphate site is built by Thr163, Cys164, Thr258, and Asn312. An N6-(pyridoxal phosphate)lysine modification is found at Lys315.

It belongs to the group II decarboxylase family. Pyridoxal 5'-phosphate serves as cofactor. In terms of tissue distribution, strongly expressed in all tissues, particularly in thick roots.

It carries out the reaction L-tyrosine + H(+) = tyramine + CO2. It catalyses the reaction L-dopa + H(+) = dopamine + CO2. It participates in aromatic compound metabolism. It functions in the pathway alkaloid biosynthesis. Its function is as follows. Aromatic amino acid decarboxylase participating in the biosynthesis of natural products derived from phenylethylamine, including mescaline, a natural hallucinogen potentially used in psychotherapeutic treatments. Catalyzes the decarboxylation of L-tyrosine and L-DOPA. The sequence is that of L-tyrosine/L-DOPA decarboxylase 2 from Lophophora williamsii (Peyote).